The sequence spans 297 residues: Homoserine kinase (297 aa).

Pro82 to Ser92 provides a ligand contact to ATP.

The protein belongs to the GHMP kinase family. Homoserine kinase subfamily.

The protein resides in the cytoplasm. The catalysed reaction is L-homoserine + ATP = O-phospho-L-homoserine + ADP + H(+). Its pathway is amino-acid biosynthesis; L-threonine biosynthesis; L-threonine from L-aspartate: step 4/5. In terms of biological role, catalyzes the ATP-dependent phosphorylation of L-homoserine to L-homoserine phosphate. The sequence is that of Homoserine kinase from Bacillus anthracis (strain CDC 684 / NRRL 3495).